Consider the following 144-residue polypeptide: Superoxide dismutase [Mn], mitochondrial (144 aa).

3 residues coordinate Mn(2+): H10, H58, and D143.

This sequence belongs to the iron/manganese superoxide dismutase family. Homotetramer. Mn(2+) is required as a cofactor.

Its subcellular location is the mitochondrion matrix. The catalysed reaction is 2 superoxide + 2 H(+) = H2O2 + O2. In terms of biological role, destroys superoxide anion radicals which are normally produced within the cells and which are toxic to biological systems. The sequence is that of Superoxide dismutase [Mn], mitochondrial from Apostichopus californicus (California sea cucumber).